We begin with the raw amino-acid sequence, 245 residues long: Tetraspanin-6 (245 aa).

Topologically, residues 1–19 are cytoplasmic; it reads MASPSRRLQTKPVITCFKS. Residues 20–40 form a helical membrane-spanning segment; it reads VLLIYTFIFWITGVILLAVGI. The Extracellular segment spans residues 41–59; it reads WGKVSLENYFSLLNEKATN. Residues 60–80 traverse the membrane as a helical segment; sequence VPFVLIGTGTVIILLGTFGCF. At 81–93 the chain is on the cytoplasmic side; it reads ATCRASAWMLKLY. A helical membrane pass occupies residues 94-114; the sequence is AMFLTLIFLVELVAAIIGFVF. Over 115-208 the chain is Extracellular; the sequence is RHEIKNSLKN…IMVMTIIESE (94 aa). Asn134 carries N-linked (GlcNAc...) asparagine glycosylation. Residues 209–229 traverse the membrane as a helical segment; it reads MGVVAGISFGVACFQLIGIFL. Residues 230–245 are Cytoplasmic-facing; the sequence is AYCLSRAITNNQYEIV.

This sequence belongs to the tetraspanin (TM4SF) family.

It localises to the membrane. The protein is Tetraspanin-6 (TSPAN6) of Bos taurus (Bovine).